The sequence spans 1101 residues: ATP-citrate synthase (1101 aa).

Positions 4–265 (KAISEQTGKE…LDAKSGASLK (262 aa)) constitute an ATP-grasp domain. ATP-binding residues include K58, R66, G67, P109, V111, and E118. Y131 bears the Phosphotyrosine mark. D216 is a binding site for ATP. Positions 257, 260, and 262 each coordinate Mg(2+). Residue S263 is modified to Phosphoserine. Citrate is bound by residues G309, N346, T348, Y364, and R379. Positions 441 to 457 (ASGSTSTPAPSRTASFS) are enriched in low complexity. The segment at 441–487 (ASGSTSTPAPSRTASFSESRADEVAPAKKAKPAMPQDSVPSPRSLQG) is disordered. A Phosphothreonine modification is found at T447. A Phosphoserine modification is found at S451. S455 is subject to Phosphoserine; by PKA and PKB/AKT1 or PKB/AKT2 or BCKDK. S459 and S481 each carry phosphoserine. Positions 478 to 487 (SVPSPRSLQG) are enriched in polar residues. 3 positions are modified to N6-acetyllysine; alternate: K540, K546, and K554. Residues K540, K546, and K554 each participate in a glycyl lysine isopeptide (Lys-Gly) (interchain with G-Cter in ubiquitin); alternate cross-link. A Phosphothreonine modification is found at T639. A Phosphoserine modification is found at S663. The residue at position 682 (Y682) is a Phosphotyrosine. Residue H760 is the Tele-phosphohistidine intermediate of the active site. 779–789 (LKEAGVFVPRS) is a CoA binding site. At S839 the chain carries Phosphoserine. N6-acetyllysine is present on residues K948, K968, K978, and K1077. S1100 carries the post-translational modification Phosphoserine.

This sequence in the N-terminal section; belongs to the succinate/malate CoA ligase beta subunit family. The protein in the C-terminal section; belongs to the succinate/malate CoA ligase alpha subunit family. As to quaternary structure, homotetramer. Mg(2+) is required as a cofactor. Phosphorylated by PKA and GSK3 in a sequential manner; phosphorylation results in activation of its activity. Phosphorylation on Thr-447 and Ser-451 depends on the phosphorylation state of Ser-455. Phosphorylation on Ser-455 is decreased by prior phosphorylation on the other 2 residues. Phosphorylated at Ser-455 by BCKDK and dephosphorylated by protein phosphatase PPM1K. Post-translationally, ISGylated. In terms of processing, acetylated at Lys-540, Lys-546 and Lys-554 by KAT2B/PCAF. Acetylation is promoted by glucose and stabilizes the protein, probably by preventing ubiquitination at the same sites. Acetylation promotes de novo lipid synthesis. Deacetylated by SIRT2. Ubiquitinated at Lys-540, Lys-546 and Lys-554 by the BCR(KLHL25) E3 ubiquitin ligase complex and UBR4, leading to its degradation. Ubiquitination is probably inhibited by acetylation at same site. BCR(KLHL25)-mediated degradation of ACLY promotes fatty acid oxidation and is required for differentiation of inducible regulatory T (iTreg) cells.

It localises to the cytoplasm. Its subcellular location is the cytosol. The enzyme catalyses oxaloacetate + acetyl-CoA + ADP + phosphate = citrate + ATP + CoA. With respect to regulation, phosphorylation results in activation of its activity. Glucose 6-phosphate, fructose 6-phosphate, fructose 2,6-bisphosphate, ribulose 5-phosphate, and fructose 1,6-bisphosphate also act as activators. Its function is as follows. Catalyzes the cleavage of citrate into oxaloacetate and acetyl-CoA, the latter serving as common substrate in multiple biochemical reactions in protein, carbohydrate and lipid metabolism. The protein is ATP-citrate synthase (ACLY) of Homo sapiens (Human).